Consider the following 479-residue polypeptide: MSATALQVKTTQKPNSRLAVEVAVPAERCQANYEAAVTRLSRTTNLPGFRKGKVPRAVLLQQIGPVRIRATALESLVDAVWREVLEQESIEPLCEPELSGGFDALLESFQPSEALTLTLETDVTPTPKLKATKGLQAEAEVVTFDPSKVDELIEQSRKQLATLVPVESRPAAIGDIAVVSFSGTYDDDGSAIEGGSSDSMDVDLEDGQMIPGFVEGIIGMNLGDEKTVDCHFPDDYSKEDARGRKASFVINLKELKTRELPDLDDAFAQQSSDKATLEELRNDLEQRLQEDAKRRDRSNRHDALLEALTEQLEVDLPNTLVQQEIRNLVEQTASQFAQQGMDVKSMFTPELVRSLMESSRPEAEERLRRSFALTALAESEDLKIEESEISAKVKEVSRELSGERDIDPARLRQAVSDDLLKDKLLDWLEDNSTITEKVLESEAKTSKPAAKSKGSKTKSTKTKTNKANTEKPASDKSKS.

Residues 174–261 (GDIAVVSFSG…LKELKTRELP (88 aa)) form the PPIase FKBP-type domain. A disordered region spans residues 438–479 (VLESEAKTSKPAAKSKGSKTKSTKTKTNKANTEKPASDKSKS). A compositionally biased stretch (basic residues) spans 453-464 (KGSKTKSTKTKT). Positions 468–479 (NTEKPASDKSKS) are enriched in basic and acidic residues.

It belongs to the FKBP-type PPIase family. Tig subfamily.

It localises to the cytoplasm. The enzyme catalyses [protein]-peptidylproline (omega=180) = [protein]-peptidylproline (omega=0). Functionally, involved in protein export. Acts as a chaperone by maintaining the newly synthesized protein in an open conformation. Functions as a peptidyl-prolyl cis-trans isomerase. This Prochlorococcus marinus (strain MIT 9313) protein is Trigger factor.